A 299-amino-acid chain; its full sequence is MKVLCTVLVVTLLAGCRADVEPEPEVLEPAVWKSGQPWELALGRFWDYVRWVQTLSDQVQEELLSSQVTQELTVLMEDTMKAVKAYKSELEQELVPMAEDTKARLSKELQAAQARLGADMEEVRNRLAQYRNEMQAMLGQSADELRARLASHLRKLRKRMLRDAEDLQKRLAVYKDGASEGAERGVSAIRERLGSLVEQSRVRAALTGQPLQERAQAWGKQLRGRLEEVRGQAQDRLEEMREQMEEVRVKIEEQAEAFQTRLKGWFEPMVEDMRRQWADLIEKVQAAVGASTPVPSQKP.

The first 18 residues, 1–18 (MKVLCTVLVVTLLAGCRA), serve as a signal peptide directing secretion. 7 repeat units span residues 74-95 (VLME…QELV), 96-117 (PMAE…ARLG), 118-139 (ADME…AMLG), 140-161 (QSAD…KRML), 162-183 (RDAE…EGAE), 184-205 (RGVS…VRAA), and 224-245 (GRLE…EQME). An 8 X 22 AA approximate tandem repeats region spans residues 74–245 (VLMEDTMKAV…RLEEMREQME (172 aa)). Met137 bears the Methionine sulfoxide mark. Ser141 carries the post-translational modification Phosphoserine. An LDL and other lipoprotein receptors binding region spans residues 152 to 162 (HLRKLRKRMLR). Heparin is bound at residue 156–159 (LRKR). Residues 204 to 273 (AALTGQPLQE…GWFEPMVEDM (70 aa)) form a lipid-binding and lipoprotein association region. Heparin is bound at residue 219 to 226 (GKQLRGRL). Residues 261–273 (RLKGWFEPMVEDM) form a specificity for association with VLDL region.

The protein belongs to the apolipoprotein A1/A4/E family. In terms of assembly, homotetramer. May interact with ABCA1; functionally associated with ABCA1 in the biogenesis of HDLs. May interact with APP/A4 amyloid-beta peptide; the interaction is extremely stable in vitro but its physiological significance is unclear. May interact with MAPT. May interact with MAP2. In the cerebrospinal fluid, interacts with secreted SORL1. Interacts with PMEL; this allows the loading of PMEL luminal fragment on ILVs to induce fibril nucleation. APOE exists as multiple glycosylated and sialylated glycoforms within cells and in plasma. The extent of glycosylation and sialylation are tissue and context specific. In terms of processing, glycated in plasma VLDL. Post-translationally, phosphorylated by FAM20C in the extracellular medium.

The protein resides in the secreted. It is found in the extracellular space. It localises to the extracellular matrix. Its subcellular location is the extracellular vesicle. The protein localises to the endosome. The protein resides in the multivesicular body. Functionally, APOE is an apolipoprotein, a protein associating with lipid particles, that mainly functions in lipoprotein-mediated lipid transport between organs via the plasma and interstitial fluids. APOE is a core component of plasma lipoproteins and is involved in their production, conversion and clearance. Apolipoproteins are amphipathic molecules that interact both with lipids of the lipoprotein particle core and the aqueous environment of the plasma. As such, APOE associates with chylomicrons, chylomicron remnants, very low density lipoproteins (VLDL) and intermediate density lipoproteins (IDL) but shows a preferential binding to high-density lipoproteins (HDL). It also binds a wide range of cellular receptors including the LDL receptor/LDLR, the LDL receptor-related proteins LRP1, LRP2 and LRP8 and the very low-density lipoprotein receptor/VLDLR that mediate the cellular uptake of the APOE-containing lipoprotein particles. Finally, APOE also has a heparin-binding activity and binds heparan-sulfate proteoglycans on the surface of cells, a property that supports the capture and the receptor-mediated uptake of APOE-containing lipoproteins by cells. A main function of APOE is to mediate lipoprotein clearance through the uptake of chylomicrons, VLDLs, and HDLs by hepatocytes. APOE is also involved in the biosynthesis by the liver of VLDLs as well as their uptake by peripheral tissues ensuring the delivery of triglycerides and energy storage in muscle, heart and adipose tissues. By participating in the lipoprotein-mediated distribution of lipids among tissues, APOE plays a critical role in plasma and tissues lipid homeostasis. APOE is also involved in two steps of reverse cholesterol transport, the HDLs-mediated transport of cholesterol from peripheral tissues to the liver, and thereby plays an important role in cholesterol homeostasis. First, it is functionally associated with ABCA1 in the biogenesis of HDLs in tissues. Second, it is enriched in circulating HDLs and mediates their uptake by hepatocytes. APOE also plays an important role in lipid transport in the central nervous system, regulating neuron survival and sprouting. In Octodon degus (Degu), this protein is Apolipoprotein E (APOE).